Consider the following 285-residue polypeptide: Small ribosomal subunit protein uS2 (285 aa).

The interval 229 to 285 is disordered; sequence RHNGKSNAAEEPMAEWERELLEQHEEQKSQDAAPAEQSAPAAEAPAETEQKDAPAAE. Residues 243 to 257 are compositionally biased toward basic and acidic residues; it reads EWERELLEQHEEQKS. The segment covering 260 to 275 has biased composition (low complexity); it reads AAPAEQSAPAAEAPAE. A compositionally biased stretch (basic and acidic residues) spans 276-285; it reads TEQKDAPAAE.

Belongs to the universal ribosomal protein uS2 family.

This is Small ribosomal subunit protein uS2 from Kocuria rhizophila (strain ATCC 9341 / DSM 348 / NBRC 103217 / DC2201).